Consider the following 343-residue polypeptide: MQEALLPPAHPGRFYSDFGPKPFGSGDQRLSSPNLLTNGGDLFYGCYSPFSPTRVLSPPPPRRAASFSHCSSSSDSVVDDGDGAGAAAATEHRLHLAHLALQYQEMANRFELCLSHLADAADEAAALRQENAELRVANNDLACRIAKFGGRQSSAIALAGDLRRLRLPKEQTVPALPPPPQSPPAALMNPVAVPEKQAVLPKSISIRSTGYQKLNQGGKHRVSKPVNVGSQRVFVGIDGAEGGEHKVGVKKEEPPMGGLEFEVYNQGMFKTELCNKWEETGACPYGDQCQFAHGVAELRPVIRHPRYKTQVCRMVLAGGVCPYGHRCHFRHSITPADRFSFGH.

A coiled-coil region spans residues leucine 114–lysine 147. 2 consecutive C3H1-type zinc fingers follow at residues methionine 268–alanine 296 and arginine 306–threonine 334.

The chain is Zinc finger CCCH domain-containing protein 39 from Oryza sativa subsp. japonica (Rice).